A 444-amino-acid polypeptide reads, in one-letter code: Nuclear distribution protein nudF (444 aa).

The LisH domain maps to 9 to 41 (QAEALHKAMLAYLSVINAPQTAETLREELHFDE). Residues 60-88 (TGIARLQRRINDLEAEVRSLQAELEASPS) adopt a coiled-coil conformation. Residues 83–107 (LEASPSAARAKNQDPTNWLPKPSST) are disordered. WD repeat units follow at residues 112 to 153 (SHRD…RTLK), 155 to 195 (HIRG…ANIR), 199 to 239 (GHDH…CVKV), 243 to 282 (ATES…PKAA), 285 to 345 (GHEN…IKTL), 347 to 386 (GHDN…RLVK), and 391 to 437 (AHEH…GCAD).

This sequence belongs to the WD repeat LIS1/nudF family. In terms of assembly, interacts with dynein. Self-associates. Interacts with bnfA, nudC and nudE.

It localises to the cytoplasm. Its subcellular location is the cytoskeleton. The protein localises to the spindle pole. Its function is as follows. Positively regulates the activity of the minus-end directed microtubule motor protein dynein. May enhance dynein-mediated microtubule sliding by targeting dynein to the microtubule plus end. Required for nuclear migration during vegetative growth as well as development. Required for retrograde early endosome (EE) transport from the hyphal tip. Required for localization of dynein to the mitotic spindle poles. Recruits additional proteins to the dynein complex at SPBs. This chain is Nuclear distribution protein nudF, found in Emericella nidulans (strain FGSC A4 / ATCC 38163 / CBS 112.46 / NRRL 194 / M139) (Aspergillus nidulans).